The sequence spans 570 residues: Glutamate--tRNA ligase, chloroplastic/mitochondrial (570 aa).

The N-terminal 39 residues, 1–39, are a transit peptide targeting the chloroplast and mitochondrion; that stretch reads MASLVYGTPWLRVRSLPELAPAFLRRRQSSLFYCSRRSF. Residue 57–59 coordinates L-glutamate; that stretch reads RFA. The 'HIGH' region motif lies at 60–70; the sequence is PSPTGNLHVGG. His-67 is an ATP binding site. Residues Glu-93, 245-249, and Arg-263 each bind L-glutamate; that span reads YNFCV. ATP is bound by residues Glu-266 and 301 to 305; that span reads KLSKR. A 'KMSKS' region motif is present at residues 301-305; that stretch reads KLSKR.

It belongs to the class-I aminoacyl-tRNA synthetase family. Glutamate--tRNA ligase type 1 subfamily.

It is found in the plastid. The protein localises to the chloroplast. It localises to the mitochondrion. The enzyme catalyses tRNA(Glu) + L-glutamate + ATP = L-glutamyl-tRNA(Glu) + AMP + diphosphate. In terms of biological role, catalyzes the attachment of glutamate to tRNA(Glu) in a two-step reaction: glutamate is first activated by ATP to form Glu-AMP and then transferred to the acceptor end of tRNA(Glu). The chain is Glutamate--tRNA ligase, chloroplastic/mitochondrial from Arabidopsis thaliana (Mouse-ear cress).